Consider the following 554-residue polypeptide: Undecaprenyl phosphate-alpha-4-amino-4-deoxy-L-arabinose arabinosyl transferase (554 aa).

The next 11 membrane-spanning stretches (helical) occupy residues 4-24 (LKDSGAALLALFFVLVYLLPV), 87-107 (FGSIFSTALSAVLVYWLATLL), 115-135 (VLATLIYLSFLLVFGIGTYAV), 178-198 (FMTKGFLALAVPVIAVLPIVI), 206-226 (LVVFGPIAIVCAVLLSLPWAL), 262-282 (YLPILCIGVLPWLGLLPGALF), 293-313 (ELFFLLSWVVMPLLFFSVAKG), 315-335 (LPTYILPCMAPLSLLMAAYAT), 351-371 (VINLLFGVACALVIVVIGLGL), 384-404 (QKVWLGVLAFAGWGVTGFITL), and 414-434 (AAACPLLFILLVGYLIPQQVV).

It belongs to the glycosyltransferase 83 family.

It is found in the cell inner membrane. The enzyme catalyses 4-amino-4-deoxy-alpha-L-arabinopyranosyl di-trans,octa-cis-undecaprenyl phosphate + lipid IVA = lipid IIA + di-trans,octa-cis-undecaprenyl phosphate.. It functions in the pathway lipopolysaccharide metabolism; 4-amino-4-deoxy-beta-L-arabinose-lipid A biosynthesis. Functionally, catalyzes the transfer of the L-Ara4N moiety of the glycolipid undecaprenyl phosphate-alpha-L-Ara4N to lipid A. The modified arabinose is attached to lipid A and is required for resistance to polymyxin and cationic antimicrobial peptides. This chain is Undecaprenyl phosphate-alpha-4-amino-4-deoxy-L-arabinose arabinosyl transferase, found in Yersinia pseudotuberculosis serotype O:3 (strain YPIII).